We begin with the raw amino-acid sequence, 251 residues long: Diphthine synthase (251 aa).

Residues aspartate 83, leucine 86, 111–112 (SI), leucine 163, and leucine 205 each bind S-adenosyl-L-methionine.

It belongs to the diphthine synthase family. As to quaternary structure, homodimer.

The catalysed reaction is 2-[(3S)-amino-3-carboxypropyl]-L-histidyl-[translation elongation factor 2] + 3 S-adenosyl-L-methionine = diphthine-[translation elongation factor 2] + 3 S-adenosyl-L-homocysteine + 3 H(+). Its pathway is protein modification; peptidyl-diphthamide biosynthesis. S-adenosyl-L-methionine-dependent methyltransferase that catalyzes the trimethylation of the amino group of the modified target histidine residue in translation elongation factor 2 (EF-2), to form an intermediate called diphthine. The three successive methylation reactions represent the second step of diphthamide biosynthesis. In Pyrobaculum calidifontis (strain DSM 21063 / JCM 11548 / VA1), this protein is Diphthine synthase.